The sequence spans 1563 residues: Ribulose bisphosphate carboxylase (1563 aa).

His-32 and Ser-79 together coordinate substrate. Residues 197 to 217 (LAAAFVGASTTRKASSVARRA) constitute a propeptide, linker. Substrate is bound at residue Asn-328. Lys-383 acts as the Proton acceptor in catalysis. Lys-385 provides a ligand contact to substrate. 3 residues coordinate Mg(2+): Lys-408, Asp-410, and Glu-411. Lys-408 carries the N6-carboxylysine modification. The Proton acceptor role is filled by His-504. Arg-505, His-538, and Ser-585 together coordinate substrate. Positions 703–723 (LAAAFVGASTTRKASSVARRA) are cleaved as a propeptide — linker. Asn-834 contributes to the substrate binding site. Residue Lys-889 is the Proton acceptor of the active site. Lys-891 is a substrate binding site. Residues Lys-914, Asp-916, and Glu-917 each coordinate Mg(2+). Position 914 is an N6-carboxylysine (Lys-914). His-1010 serves as the catalytic Proton acceptor. Substrate contacts are provided by Arg-1011, His-1044, and Ser-1091. The propeptide at 1209–1229 (LAAAFVGASTTRKASSVARRA) is linker. Asn-1340 is a substrate binding site. Residue Lys-1395 is the Proton acceptor of the active site. Lys-1397 is a binding site for substrate. Mg(2+) contacts are provided by Lys-1420, Asp-1422, and Glu-1423. Lys-1420 carries the post-translational modification N6-carboxylysine. His-1516 (proton acceptor) is an active-site residue. Substrate is bound by residues Arg-1517 and His-1550.

It belongs to the RuBisCO large chain family. Type II subfamily. In terms of assembly, homodimer. Mg(2+) is required as a cofactor. In terms of processing, in Western blots an approximately 220 kDa polyprotein and 2 smaller proteins of about 55 and 52 kDa are detected, suggesting the polyprotein may be cleaved at one end of the linker and then at the other end to give mature RuBisCO.

It localises to the plastid. It is found in the chloroplast. The catalysed reaction is 2 (2R)-3-phosphoglycerate + 2 H(+) = D-ribulose 1,5-bisphosphate + CO2 + H2O. The enzyme catalyses D-ribulose 1,5-bisphosphate + O2 = 2-phosphoglycolate + (2R)-3-phosphoglycerate + 2 H(+). RuBisCO catalyzes two reactions: the carboxylation of D-ribulose 1,5-bisphosphate, the primary event in carbon dioxide fixation, as well as the oxidative fragmentation of the pentose substrate. Both reactions occur simultaneously and in competition at the same active site. This is Ribulose bisphosphate carboxylase (rbcL) from Prorocentrum minimum (Dinoflagellate).